The sequence spans 492 residues: MDFNILYSFVSNKTFTDVEIVLIDEINRVNMNVHKAVLASSSQYFLNLFTKFSETNKSTITIRVRDSQISSDIICSFYGQIVDSTNYPDWKYTLLKYQCLDYFSLDYNIDILTGLKIPSEGFDLLLETANTIGYRNEINKLIAKNIPDNYDLSIFSDEFLGSLRKYICKHNIITANFKSINIYDVITGNKLSSLSLNNNFSHVCKVGKNIIAIVYYCADKIFLFDLVSRDVIDTLHNLDIQSSCDMTAICYIKSLNHLVTANSNNQLIVWDLTTRQIIKIKKVNRLINRLIANHTIITDYNLFISIGYNESILVWDKNYTISKGIDSPNKITTYSASGRELILANARYIKIFDIDEGKILYKTNNDTFRTPYDIINICDNSYILFDSDNEPICYLIYDWKNVSKIRLNRSKKNYDNIFCKKFPPESVNYSANDTNSNILIVVTDYHTVYAQINGKKYGPFVVKPNNIAGVFFVKDKKATNLLNSINDLIKHN.

The BTB domain maps to 16–86 (TDVEIVLIDE…FYGQIVDSTN (71 aa)). WD repeat units lie at residues 241-281 (QSSC…IKIK) and 286-325 (LINR…SKGI).

The protein belongs to the mimivirus BTB/WD family.

The sequence is that of Putative BTB/POZ domain and WD-repeat protein R786 from Acanthamoeba polyphaga (Amoeba).